The primary structure comprises 463 residues: MQLMLRLNPKTFIKVGREYVLKFGHLQRVWIFNRLLIMSGDAELNEQLLSSQEHLVKHPVYKVLGQWLGNGLLLSDGKVWHQRRKIITPTFHFSILEQFVEVFDQQSNICVQRLAQKANGNTFDVYRSICAAALDIIAETAMGTKIYAQANESTPYAEAVNECTALLSWRFMSVYLQVELLFTLTHPHLKWRQTQLIRTMQEFTIKVIEKRRQALEDQQSKLMDTADEDVGSKRRMALLDVLLMSTVDGRPLTNDEIREEVDTFMFEGHDTTTSALSFCLHELSRHPEVQAKMLEEIVQVLGTDRSRPVSIRDLGELKYMECVIKESLRMYPPVPIVGRKLQTDFKYTHSVHGDGVIPAGSEIIIGIFGVHRQPETFPNPDEFIPERHENGSRVAPFKMIPFSAGPRNCIGQKFAQLEMKMMLAKIVREYELLPMGQRVECIVNIVLRSETGFQLGMRKRKHN.

Residues Glu-267 and Cys-409 each coordinate heme.

The protein belongs to the cytochrome P450 family. The cofactor is heme.

The protein localises to the endoplasmic reticulum membrane. It localises to the microsome membrane. May be involved in the metabolism of insect hormones and in the breakdown of synthetic insecticides. The protein is Cytochrome P450 4d8 (Cyp4d8) of Drosophila melanogaster (Fruit fly).